The sequence spans 409 residues: MDRNPELAIADARPSQDGRAAPSRLDDAQLAELASRIKAWGRELGFGAIGISDTDLSEAEAGLAAWLEAGCHGEMDYMAKHGMKRARPAELVAGTRRVISARLAYLPAGTLDGAPDAQGARRDWRAREAARIADPQAAVVSVYARGRDYHKVLRNRLQTLAERIEAEIGAFGHRVFTDSAPVLEVELAQKAGVGWRGKHTLLLQRDAGSFFFLGEIYVDVPLPADAQTSPDAAPETPGAHCGSCTRCLGACPTGAIVAPYRVDARRCISYLTIELHGSIPEPLRPLIGNRVYGCDDCQLVCPWNKFAQAAPVADFDVRHGLDRASLVELFEWTAEQFDERMQGSAIRRIGYERWLRNLAVGLGNALRAAPGGIGPDARAAIVAALRARLDDPCVSALVREHVEWALRAA.

The interval 1-23 (MDRNPELAIADARPSQDGRAAPS) is disordered. The active-site Proton donor is the Asp-178. Residues 232–261 (AAPETPGAHCGSCTRCLGACPTGAIVAPYR) enclose the 4Fe-4S ferredoxin-type domain. Residues Cys-241, Cys-244, Cys-247, Cys-251, Cys-267, Cys-294, Cys-297, and Cys-301 each contribute to the [4Fe-4S] cluster site.

The protein belongs to the QueG family. In terms of assembly, monomer. Requires cob(II)alamin as cofactor. The cofactor is [4Fe-4S] cluster.

The protein resides in the cytoplasm. The catalysed reaction is epoxyqueuosine(34) in tRNA + AH2 = queuosine(34) in tRNA + A + H2O. It participates in tRNA modification; tRNA-queuosine biosynthesis. Functionally, catalyzes the conversion of epoxyqueuosine (oQ) to queuosine (Q), which is a hypermodified base found in the wobble positions of tRNA(Asp), tRNA(Asn), tRNA(His) and tRNA(Tyr). This is Epoxyqueuosine reductase from Burkholderia pseudomallei (strain K96243).